Consider the following 439-residue polypeptide: Forkhead box protein J1-B (439 aa).

A DNA-binding region (fork-head) is located at residues 124–218 (KPPYSYATLI…MNGAMKKRRL (95 aa)).

Belongs to the FOXJ1 family.

It is found in the nucleus. Functionally, key transcription factor required for motile ciliogenesis. Activates genes essential for motile cilia formation and function. This is Forkhead box protein J1-B (foxj1-b) from Xenopus laevis (African clawed frog).